The primary structure comprises 407 residues: 1-deoxy-D-xylulose 5-phosphate reductoisomerase (407 aa).

NADPH-binding residues include Thr-25, Gly-26, Ser-27, Ile-28, Asn-53, and Asn-136. Lys-137 is a binding site for 1-deoxy-D-xylulose 5-phosphate. Position 138 (Glu-138) interacts with NADPH. Asp-162 lines the Mn(2+) pocket. Residues Ser-163, Glu-164, Ser-188, and His-211 each coordinate 1-deoxy-D-xylulose 5-phosphate. Glu-164 is a Mn(2+) binding site. Gly-217 contributes to the NADPH binding site. 4 residues coordinate 1-deoxy-D-xylulose 5-phosphate: Ser-224, Asn-229, Lys-230, and Glu-233. Glu-233 contributes to the Mn(2+) binding site.

It belongs to the DXR family. Requires Mg(2+) as cofactor. It depends on Mn(2+) as a cofactor.

The catalysed reaction is 2-C-methyl-D-erythritol 4-phosphate + NADP(+) = 1-deoxy-D-xylulose 5-phosphate + NADPH + H(+). It participates in isoprenoid biosynthesis; isopentenyl diphosphate biosynthesis via DXP pathway; isopentenyl diphosphate from 1-deoxy-D-xylulose 5-phosphate: step 1/6. Its function is as follows. Catalyzes the NADPH-dependent rearrangement and reduction of 1-deoxy-D-xylulose-5-phosphate (DXP) to 2-C-methyl-D-erythritol 4-phosphate (MEP). In Bradyrhizobium sp. (strain BTAi1 / ATCC BAA-1182), this protein is 1-deoxy-D-xylulose 5-phosphate reductoisomerase.